The chain runs to 332 residues: Endo-1,4-beta-xylanase (332 aa).

The first 21 residues, 1–21 (MLSSTTLLAILSALALTSVQA), serve as a signal peptide directing secretion. The GH10 domain maps to 26–316 (KNSLDYLANK…KSTYYVVQQA (291 aa)). Catalysis depends on Glu120, which acts as the Proton donor. Cys128 and Cys160 are joined by a disulfide. The active-site Nucleophile is Glu214. Cys247 and Cys253 are oxidised to a cystine.

It belongs to the glycosyl hydrolase 10 (cellulase F) family.

Its subcellular location is the secreted. It catalyses the reaction Endohydrolysis of (1-&gt;4)-beta-D-xylosidic linkages in xylans.. Requires at least three xylose residues for catalytic activity. Does not have activity against xylobiose. The polypeptide is Endo-1,4-beta-xylanase (Naganishia albida (Cryptococcus albidus)).